A 634-amino-acid polypeptide reads, in one-letter code: RNA polymerase sigma factor RpoD (634 aa).

The tract at residues 177–202 (LHDETPENDEENSSETEGEEHEDNHL) is disordered. The span at 182–197 (PENDEENSSETEGEEH) shows a compositional bias: acidic residues. The sigma-70 factor domain-2 stretch occupies residues 385–455 (MIEANLRLVI…TRAIADQART (71 aa)). An Interaction with polymerase core subunit RpoC motif is present at residues 409–412 (DLIQ). The sigma-70 factor domain-3 stretch occupies residues 464-541 (ETINKILRTS…DKNAVAPIDA (78 aa)). The tract at residues 554 to 607 (VLATLTPREERVLRMRFGIGMNTDHTLEEVGQQFKVTRERIRQIESKALRKLQH) is sigma-70 factor domain-4. Positions 580–599 (LEEVGQQFKVTRERIRQIES) form a DNA-binding region, H-T-H motif. Residues 608 to 634 (PIRSKKLNSFRSGGKRGDGNSSDLLEA) are disordered.

The protein belongs to the sigma-70 factor family. RpoD/SigA subfamily. In terms of assembly, interacts transiently with the RNA polymerase catalytic core.

The protein localises to the cytoplasm. Its function is as follows. Sigma factors are initiation factors that promote the attachment of RNA polymerase to specific initiation sites and are then released. This sigma factor is the primary sigma factor during exponential growth. This Rickettsia conorii (strain ATCC VR-613 / Malish 7) protein is RNA polymerase sigma factor RpoD.